The sequence spans 176 residues: Large ribosomal subunit protein eL20 (176 aa).

The protein belongs to the eukaryotic ribosomal protein eL20 family. As to quaternary structure, component of the large ribosomal subunit.

Its subcellular location is the cytoplasm. Functionally, component of the large ribosomal subunit. The ribosome is a large ribonucleoprotein complex responsible for the synthesis of proteins in the cell. The polypeptide is Large ribosomal subunit protein eL20 (rpl18a) (Ictalurus punctatus (Channel catfish)).